We begin with the raw amino-acid sequence, 568 residues long: MQVELIIKNLNVYNSYFKKFIKGDILINKGKFLHIGKGYEDRLWSENVIDGEGKYIIPGLIDIHMHIESSMTIPREFSKAAIKHGVTTVVADPHEIANVFGIRGIEEFIKFKGNLDIFYGIPSSVPSTSSSLETTGEKITHNEVKRLLEYDNIICLGEVMNFKDLIEDDDSNINKIINISKEKNIPLEGHCPKIQGVDLSLYIYRGVNGDHTQQSVGSLQEKIQNGMFIEMQHKSMTLENIKFLIENNLYEHFALVTDDVMADKLVKGHLDEILKEAVKLGMSIENAIYASTYTPARRMNLLDRGTIAPGKLADFILLDSIEDFNIYEVYKNGEMVFNRDKGLKEEFFEDKSKLDYRFYNSIELNNITKESLEVKVPNKYKNKVNCRTMKVLKNTTFTEEGEVTLNVYNNILQWEKSSCALIAVFERYGKNNNISFGLVEGEIIKEGAIATTWAHDHHNLMVMGRNISDMTIAANEVINSRGGYVVSKNNEVIAKLELPIGGIISDEPIEIIGEKLGEVRSAMRDLGYNHMNEIMSFSTLSLPVSPALKITDKGLIDVKKGSIVSLFK.

The protein belongs to the metallo-dependent hydrolases superfamily. Adenine deaminase family. The cofactor is Mn(2+).

The enzyme catalyses adenine + H2O + H(+) = hypoxanthine + NH4(+). The polypeptide is Adenine deaminase (Clostridium perfringens (strain ATCC 13124 / DSM 756 / JCM 1290 / NCIMB 6125 / NCTC 8237 / Type A)).